A 1070-amino-acid chain; its full sequence is DNA-directed RNA polymerase subunit beta (1070 aa).

This sequence belongs to the RNA polymerase beta chain family. As to quaternary structure, in plastids the minimal PEP RNA polymerase catalytic core is composed of four subunits: alpha, beta, beta', and beta''. When a (nuclear-encoded) sigma factor is associated with the core the holoenzyme is formed, which can initiate transcription.

The protein localises to the plastid. Its subcellular location is the chloroplast. The catalysed reaction is RNA(n) + a ribonucleoside 5'-triphosphate = RNA(n+1) + diphosphate. In terms of biological role, DNA-dependent RNA polymerase catalyzes the transcription of DNA into RNA using the four ribonucleoside triphosphates as substrates. This chain is DNA-directed RNA polymerase subunit beta, found in Solanum lycopersicum (Tomato).